A 377-amino-acid chain; its full sequence is MPGEQTGETPTVAGVGGGGAGCSAGNSGGSSGCGAGGGGGGSGGGGGGGGDSQRSIPTPFLTKTYQLVEDPVYDELISWNEDGTTFIVWRPAEFARDLLPKYFKHNNFSSFVRQLNTYGFRKVVPDRWEFSNDCFKRGEKILLRDIQRRKISQPAMAAAAAAAAAAVAASAVTVAAVPVVAHIVSPSNSGEEQVISSNSSPAAAAAAIGGVVGGGSLQRTTSCTTAPELVEENERLRKDNERLRKEMTKLKGLYANIYTLMANFTPGQEDCAHLLPEGKPLDLLPERQEMSEAIMASEIETGIGLKLGEDLTPRLFGVSIGVKRARREEELGAAEEEDDDRREAAAQEGEQSSDVKAEPMEENNSGNHNGSWLELGK.

The disordered stretch occupies residues 1–56 (MPGEQTGETPTVAGVGGGGAGCSAGNSGGSSGCGAGGGGGGSGGGGGGGGDSQRSI). Residues 14 to 51 (GVGGGGAGCSAGNSGGSSGCGAGGGGGGSGGGGGGGGD) are compositionally biased toward gly residues. The DNA-binding element occupies 57-151 (PTPFLTKTYQ…LLRDIQRRKI (95 aa)). Positions 220-265 (TTSCTTAPELVEENERLRKDNERLRKEMTKLKGLYANIYTLMANFT) are hydrophobic repeat HR-A/B. The short motif at 323–327 (KRARR) is the Nuclear localization signal element. Residues 326-377 (RREEELGAAEEEDDDRREAAAQEGEQSSDVKAEPMEENNSGNHNGSWLELGK) are disordered. Over residues 331-340 (LGAAEEEDDD) the composition is skewed to acidic residues.

The protein belongs to the HSF family. Class B subfamily. Homotrimer. Exhibits temperature-dependent phosphorylation.

It is found in the nucleus. Its function is as follows. Transcriptional regulator that specifically binds DNA sequence 5'-AGAAnnTTCT-3' known as heat shock promoter elements (HSE). This Arabidopsis thaliana (Mouse-ear cress) protein is Heat stress transcription factor B-2b (HSFB2B).